The primary structure comprises 178 residues: Translation initiation factor IF-3 (178 aa).

The tract at residues 1 to 20 (MRRPFRATPVQKDGPRSNRD) is disordered.

Belongs to the IF-3 family. Monomer.

It is found in the cytoplasm. In terms of biological role, IF-3 binds to the 30S ribosomal subunit and shifts the equilibrium between 70S ribosomes and their 50S and 30S subunits in favor of the free subunits, thus enhancing the availability of 30S subunits on which protein synthesis initiation begins. This is Translation initiation factor IF-3 from Brucella anthropi (strain ATCC 49188 / DSM 6882 / CCUG 24695 / JCM 21032 / LMG 3331 / NBRC 15819 / NCTC 12168 / Alc 37) (Ochrobactrum anthropi).